A 215-amino-acid chain; its full sequence is Ras-related protein RAB1BV (215 aa).

GTP is bound by residues 22–29 (GDSGVGKS), 70–74 (DTAGQ), and 128–131 (NKAD). Residues 183–215 (DSDTRQEAQPSITIKPADQSGNQAAAKSACCGS) are disordered. S-geranylgeranyl cysteine attachment occurs at residues Cys212 and Cys213.

Belongs to the small GTPase superfamily. Rab family.

It localises to the cell membrane. The chain is Ras-related protein RAB1BV (RAB1BV) from Beta vulgaris (Sugar beet).